Consider the following 5101-residue polypeptide: Malformin synthetase mlfA (5101 aa).

An adenylation 1 region spans residues 225-616 (ERHAANRPHS…CGRADTQVKL (392 aa)). The region spanning 757 to 830 (SRLEQKIQLA…EAASLAEVQE (74 aa)) is the Carrier 1 domain. Ser791 carries the post-translational modification O-(pantetheine 4'-phosphoryl)serine. Residues 868–1299 (EDVFPCTTMQ…ALNTLSLLQA (432 aa)) are condensation 1. Positions 1327–1716 (DRWVTRQPEG…GRKDTQVKLR (390 aa)) are adenylation 2. Residues 1854–1931 (TPTLELERTL…QLAAEVGEPA (78 aa)) enclose the Carrier 2 domain. At Ser1891 the chain carries O-(pantetheine 4'-phosphoryl)serine. 2 disordered regions span residues 1932-1961 (GQSA…DGVD) and 1994-2020 (GGSS…KKNA). 2 stretches are compositionally biased toward low complexity: residues 1934 to 1958 (SASS…STND) and 1996 to 2013 (SSSN…SSSS). A condensation 2 region spans residues 2066-2481 (EDIYPATALQ…AVSCSDKETL (416 aa)). The adenylation 3 stretch occupies residues 2504 to 2896 (RRTPHAPAVC…IGRRDGQLKL (393 aa)). In terms of domain architecture, Carrier 3 spans 3032–3108 (RPVTSQEHEM…QLICHLNTIR (77 aa)). Ser3069 is subject to O-(pantetheine 4'-phosphoryl)serine. Condensation regions lie at residues 3125–3590 (WVAL…TYDQ) and 3611–4030 (NIYP…EHLV). An adenylation 4 region spans residues 4055–4445 (HNSRQAVCAW…VGRKDNQIKF (391 aa)). Positions 4579-4655 (MPSTAAERKM…DLSDQAKSLI (77 aa)) constitute a Carrier 4 domain. O-(pantetheine 4'-phosphoryl)serine is present on Ser4616. Residues 4712 to 5097 (IVVDIPGPID…KIVGLLRHPE (386 aa)) form a condensation 5 region.

It belongs to the NRP synthetase family.

The protein operates within secondary metabolite biosynthesis. In terms of biological role, nonribosomal peptide synthetase; part of the gene cluster that mediates the biosynthesis of malformins, cyclic pentapeptides with a disulfide bond between 2 consecutive cysteins, that show potential anti-tumor as well as antimalarial and antitrypanosomal properties. The nonribosomal peptide synthetase mlfA is responsible of the formation of the cyclic pentapeptide. The malformin biosynthesis clusters in malformin-producing fungi also contain enzymes involved in the formation of the disulfide bond between the two consecutive cysteins within malformins, in addition to additional tailoring enzymes such as methyltransferases or oxidoreductases. They are also composed of up to 4 major facilitator superfamily transporters, and transcription factors probably involved in the regulation of the expression of those clusters. The polypeptide is Malformin synthetase mlfA (Aspergillus kawachii (strain NBRC 4308) (White koji mold)).